The chain runs to 225 residues: Transcriptional activator protein BglJ (225 aa).

The 66-residue stretch at 146 to 211 (YINQSRTLSP…GLLEAADILL (66 aa)) folds into the HTH luxR-type domain. The H-T-H motif DNA-binding region spans 170 to 189 (MTQIAEQLKRNIKTIRAHKF).

As to quaternary structure, forms a complex with RcsB; genetically both BglJ and RcsB are required to relieve bgl operon repression by H-NS and by StpA.

Functionally, a crytic transcriptional activator. When its expression is induced it relieves H-NS repression of the bgl operon. Acts independently of transcription factor LeuO. The chain is Transcriptional activator protein BglJ (bglJ) from Escherichia coli (strain K12).